Reading from the N-terminus, the 291-residue chain is 33 kDa chaperonin (291 aa).

2 cysteine pairs are disulfide-bonded: Cys-229/Cys-231 and Cys-262/Cys-265.

Belongs to the HSP33 family. Under oxidizing conditions two disulfide bonds are formed involving the reactive cysteines. Under reducing conditions zinc is bound to the reactive cysteines and the protein is inactive.

The protein resides in the cytoplasm. In terms of biological role, redox regulated molecular chaperone. Protects both thermally unfolding and oxidatively damaged proteins from irreversible aggregation. Plays an important role in the bacterial defense system toward oxidative stress. The protein is 33 kDa chaperonin of Vibrio parahaemolyticus serotype O3:K6 (strain RIMD 2210633).